A 131-amino-acid polypeptide reads, in one-letter code: Protein SOB FIVE-LIKE 4 (131 aa).

Disordered regions lie at residues 1–21 (MDKEECSSSESGWTTYLSSPI) and 40–131 (IYNY…YRMK). Over residues 8-18 (SSESGWTTYLS) the composition is skewed to polar residues. Residues 11-16 (SGWTTY) carry the SOFL-A motif. A compositionally biased stretch (basic and acidic residues) spans 46–58 (KVEHEEERNKDSD). The SOFL-B signature appears at 60–69 (SMASDASSGP). Residues 79 to 109 (KALDLKNGKNEGNSKSKNDDDHHNHYHDGKK) are compositionally biased toward basic and acidic residues. The short motif at 107–114 (GKKTSNSY) is the Nuclear localization signal element. The segment covering 114 to 131 (YRKKDKKKRENKSTYRMK) has biased composition (basic residues).

The protein belongs to the SOFL plant protein family. Expressed, at low levels, in seedlings, roots, flowers and siliques.

The protein localises to the cytoplasm. The protein resides in the nucleus. Its function is as follows. Involved in cytokinin-mediated development. The sequence is that of Protein SOB FIVE-LIKE 4 from Arabidopsis thaliana (Mouse-ear cress).